The chain runs to 85 residues: MADGNTPNTGVAHDQLRSIVERIERLEEEKAALANDIKEVYAEAKGNGFDTKTLRQVVRIRKQDKAERQEQEAILELYLSALGMA.

Belongs to the UPF0335 family.

In Parvibaculum lavamentivorans (strain DS-1 / DSM 13023 / NCIMB 13966), this protein is UPF0335 protein Plav_2034.